The chain runs to 364 residues: MTNKRKSAKPLEPAKRTPKLRTKKSRDLSASESSCDFVKVTRAGLHSRNKHQGRYDFAKLTQALPSLAPFVIKNPKGEASISFSDSTAVKMLNKALLSAHYQVANWDIPAGYLCPPIPGRADYIHRLAELLEGEVKGTFPHEKVQALDIGVGANAIYPIIAICDYRWRYTGSDVDPKSIESAQRIADSNPVLQGQLELKLQDQSQHIFQGIIGPTDYFHVTTCNPPFHASAQEAAFGTQRKLDNLAANRLKKGVTAKAGSQKISKNKPILNFGGQNSELWCQGGESSFLKRMANESERFAHQVLWFSTLVSKKDNVRPLRKQLEKLGVRSIRVVEMSQGQKVSRFVAWSFMDKLQRGEWIKLRG.

The disordered stretch occupies residues 1–28 (MTNKRKSAKPLEPAKRTPKLRTKKSRDL).

This sequence belongs to the methyltransferase superfamily. METTL16/RlmF family.

The protein resides in the cytoplasm. The enzyme catalyses adenosine(1618) in 23S rRNA + S-adenosyl-L-methionine = N(6)-methyladenosine(1618) in 23S rRNA + S-adenosyl-L-homocysteine + H(+). Functionally, specifically methylates the adenine in position 1618 of 23S rRNA. This Vibrio vulnificus (strain YJ016) protein is Ribosomal RNA large subunit methyltransferase F.